Here is a 463-residue protein sequence, read N- to C-terminus: Chromosomal replication initiator protein DnaA (463 aa).

Positions 1–83 (MSTNQIILTD…LQLFQHYNNT (83 aa)) are domain I, interacts with DnaA modulators. The interval 83–124 (TIKSIEIITKELPGTTQTVTELPTKTFADIGSSELNSENIFS) is domain II. A domain III, AAA+ region region spans residues 125 to 343 (TLDARFTFDN…GALNKVIAHS (219 aa)). 4 residues coordinate ATP: Gly-171, Gly-173, Lys-174, and Thr-175. Positions 344 to 463 (NFTLKEITLE…INLLMKILQN (120 aa)) are domain IV, binds dsDNA.

It belongs to the DnaA family. In terms of assembly, oligomerizes as a right-handed, spiral filament on DNA at oriC.

The protein localises to the cytoplasm. In terms of biological role, plays an essential role in the initiation and regulation of chromosomal replication. ATP-DnaA binds to the origin of replication (oriC) to initiate formation of the DNA replication initiation complex once per cell cycle. Binds the DnaA box (a 9 base pair repeat at the origin) and separates the double-stranded (ds)DNA. Forms a right-handed helical filament on oriC DNA; dsDNA binds to the exterior of the filament while single-stranded (ss)DNA is stabiized in the filament's interior. The ATP-DnaA-oriC complex binds and stabilizes one strand of the AT-rich DNA unwinding element (DUE), permitting loading of DNA polymerase. After initiation quickly degrades to an ADP-DnaA complex that is not apt for DNA replication. Binds acidic phospholipids. This is Chromosomal replication initiator protein DnaA from Rickettsia peacockii (strain Rustic).